The primary structure comprises 359 residues: Probable dual-specificity RNA methyltransferase RlmN (359 aa).

The active-site Proton acceptor is the glutamate 100. A Radical SAM core domain is found at 106–340 (TDKRLTVCVS…VSVRASRGRD (235 aa)). A disulfide bridge connects residues cysteine 113 and cysteine 345. [4Fe-4S] cluster contacts are provided by cysteine 120, cysteine 124, and cysteine 127. S-adenosyl-L-methionine is bound by residues 167-168 (GE), serine 197, 226-228 (SLH), and asparagine 302. The active-site S-methylcysteine intermediate is the cysteine 345.

Belongs to the radical SAM superfamily. RlmN family. The cofactor is [4Fe-4S] cluster.

Its subcellular location is the cytoplasm. The catalysed reaction is adenosine(2503) in 23S rRNA + 2 reduced [2Fe-2S]-[ferredoxin] + 2 S-adenosyl-L-methionine = 2-methyladenosine(2503) in 23S rRNA + 5'-deoxyadenosine + L-methionine + 2 oxidized [2Fe-2S]-[ferredoxin] + S-adenosyl-L-homocysteine. It carries out the reaction adenosine(37) in tRNA + 2 reduced [2Fe-2S]-[ferredoxin] + 2 S-adenosyl-L-methionine = 2-methyladenosine(37) in tRNA + 5'-deoxyadenosine + L-methionine + 2 oxidized [2Fe-2S]-[ferredoxin] + S-adenosyl-L-homocysteine. In terms of biological role, specifically methylates position 2 of adenine 2503 in 23S rRNA and position 2 of adenine 37 in tRNAs. The protein is Probable dual-specificity RNA methyltransferase RlmN of Prochlorococcus marinus (strain NATL2A).